Reading from the N-terminus, the 182-residue chain is ATP-dependent protease subunit HslV (182 aa).

Thr-10 is an active-site residue. Na(+) contacts are provided by Ala-166, Cys-169, and Ser-172.

This sequence belongs to the peptidase T1B family. HslV subfamily. In terms of assembly, a double ring-shaped homohexamer of HslV is capped on each side by a ring-shaped HslU homohexamer. The assembly of the HslU/HslV complex is dependent on binding of ATP.

Its subcellular location is the cytoplasm. It carries out the reaction ATP-dependent cleavage of peptide bonds with broad specificity.. Allosterically activated by HslU binding. Its function is as follows. Protease subunit of a proteasome-like degradation complex believed to be a general protein degrading machinery. This Rickettsia bellii (strain OSU 85-389) protein is ATP-dependent protease subunit HslV.